Here is a 258-residue protein sequence, read N- to C-terminus: Imidazole glycerol phosphate synthase subunit HisF (258 aa).

Residues Asp11 and Asp130 contribute to the active site.

The protein belongs to the HisA/HisF family. In terms of assembly, heterodimer of HisH and HisF.

The protein localises to the cytoplasm. The enzyme catalyses 5-[(5-phospho-1-deoxy-D-ribulos-1-ylimino)methylamino]-1-(5-phospho-beta-D-ribosyl)imidazole-4-carboxamide + L-glutamine = D-erythro-1-(imidazol-4-yl)glycerol 3-phosphate + 5-amino-1-(5-phospho-beta-D-ribosyl)imidazole-4-carboxamide + L-glutamate + H(+). It participates in amino-acid biosynthesis; L-histidine biosynthesis; L-histidine from 5-phospho-alpha-D-ribose 1-diphosphate: step 5/9. IGPS catalyzes the conversion of PRFAR and glutamine to IGP, AICAR and glutamate. The HisF subunit catalyzes the cyclization activity that produces IGP and AICAR from PRFAR using the ammonia provided by the HisH subunit. The polypeptide is Imidazole glycerol phosphate synthase subunit HisF (Salmonella agona (strain SL483)).